The chain runs to 213 residues: Orotate phosphoribosyltransferase (213 aa).

K26 serves as a coordination point for 5-phospho-alpha-D-ribose 1-diphosphate. 34–35 (FF) contacts orotate. 5-phospho-alpha-D-ribose 1-diphosphate-binding positions include 72 to 73 (YK), R99, K100, K103, H105, and 124 to 132 (DDVITAGTA). T128 and R156 together coordinate orotate.

This sequence belongs to the purine/pyrimidine phosphoribosyltransferase family. PyrE subfamily. As to quaternary structure, homodimer. Mg(2+) serves as cofactor.

It carries out the reaction orotidine 5'-phosphate + diphosphate = orotate + 5-phospho-alpha-D-ribose 1-diphosphate. Its pathway is pyrimidine metabolism; UMP biosynthesis via de novo pathway; UMP from orotate: step 1/2. Its function is as follows. Catalyzes the transfer of a ribosyl phosphate group from 5-phosphoribose 1-diphosphate to orotate, leading to the formation of orotidine monophosphate (OMP). The chain is Orotate phosphoribosyltransferase from Photorhabdus laumondii subsp. laumondii (strain DSM 15139 / CIP 105565 / TT01) (Photorhabdus luminescens subsp. laumondii).